We begin with the raw amino-acid sequence, 215 residues long: Na(+)-translocating NADH-quinone reductase subunit D (215 aa).

Transmembrane regions (helical) follow at residues 14 to 34 (PFIS…ALAV), 42 to 62 (FVMA…ISLI), 72 to 92 (IIVQ…LLKA), 103 to 123 (VFVG…AYAM), 131 to 151 (FLDG…VGTI), and 178 to 198 (NGML…IWVL).

It belongs to the NqrDE/RnfAE family. In terms of assembly, composed of six subunits; NqrA, NqrB, NqrC, NqrD, NqrE and NqrF.

Its subcellular location is the cell inner membrane. The enzyme catalyses a ubiquinone + n Na(+)(in) + NADH + H(+) = a ubiquinol + n Na(+)(out) + NAD(+). In terms of biological role, NQR complex catalyzes the reduction of ubiquinone-1 to ubiquinol by two successive reactions, coupled with the transport of Na(+) ions from the cytoplasm to the periplasm. NqrA to NqrE are probably involved in the second step, the conversion of ubisemiquinone to ubiquinol. The polypeptide is Na(+)-translocating NADH-quinone reductase subunit D (Tolumonas auensis (strain DSM 9187 / NBRC 110442 / TA 4)).